Consider the following 113-residue polypeptide: T cell receptor alpha variable 8-4 (113 aa).

The first 20 residues, 1-20 (MLLLLVPVLEVIFTLGGTRA), serve as a signal peptide directing secretion. Positions 21–113 (QSVTQLGSHV…DAAEYFCAVS (93 aa)) constitute an Ig-like domain. Cys42 and Cys110 are oxidised to a cystine. Asn43 is a glycosylation site (N-linked (GlcNAc...) asparagine).

Alpha-beta TR is a heterodimer composed of an alpha and beta chain; disulfide-linked. The alpha-beta TR is associated with the transmembrane signaling CD3 coreceptor proteins to form the TR-CD3 (TcR or TCR). The assembly of alpha-beta TR heterodimers with CD3 occurs in the endoplasmic reticulum where a single alpha-beta TR heterodimer associates with one CD3D-CD3E heterodimer, one CD3G-CD3E heterodimer and one CD247 homodimer forming a stable octameric structure. CD3D-CD3E and CD3G-CD3E heterodimers preferentially associate with TR alpha and TR beta chains, respectively. The association of the CD247 homodimer is the last step of TcR assembly in the endoplasmic reticulum and is required for transport to the cell surface.

It localises to the cell membrane. Functionally, v region of the variable domain of T cell receptor (TR) alpha chain that participates in the antigen recognition. Alpha-beta T cell receptors are antigen specific receptors which are essential to the immune response and are present on the cell surface of T lymphocytes. Recognize peptide-major histocompatibility (MH) (pMH) complexes that are displayed by antigen presenting cells (APC), a prerequisite for efficient T cell adaptive immunity against pathogens. Binding of alpha-beta TR to pMH complex initiates TR-CD3 clustering on the cell surface and intracellular activation of LCK that phosphorylates the ITAM motifs of CD3G, CD3D, CD3E and CD247 enabling the recruitment of ZAP70. In turn ZAP70 phosphorylates LAT, which recruits numerous signaling molecules to form the LAT signalosome. The LAT signalosome propagates signal branching to three major signaling pathways, the calcium, the mitogen-activated protein kinase (MAPK) kinase and the nuclear factor-kappa-B (NF-kB) pathways, leading to the mobilization of transcription factors that are critical for gene expression and essential for T cell growth and differentiation. The T cell repertoire is generated in the thymus, by V-(D)-J rearrangement. This repertoire is then shaped by intrathymic selection events to generate a peripheral T cell pool of self-MH restricted, non-autoaggressive T cells. Post-thymic interaction of alpha-beta TR with the pMH complexes shapes TR structural and functional avidity. The sequence is that of T cell receptor alpha variable 8-4 from Homo sapiens (Human).